Reading from the N-terminus, the 124-residue chain is Large ribosomal subunit protein eL22 (124 aa).

This sequence belongs to the eukaryotic ribosomal protein eL22 family. As to quaternary structure, component of the large ribosomal subunit. Mature ribosomes consist of a small (40S) and a large (60S) subunit. The 40S subunit contains about 32 different proteins and 1 molecule of RNA (18S). The 60S subunit contains 45 different proteins and 3 molecules of RNA (25S, 5.8S and 5S).

It is found in the cytoplasm. Functionally, component of the ribosome, a large ribonucleoprotein complex responsible for the synthesis of proteins in the cell. The small ribosomal subunit (SSU) binds messenger RNAs (mRNAs) and translates the encoded message by selecting cognate aminoacyl-transfer RNA (tRNA) molecules. The large subunit (LSU) contains the ribosomal catalytic site termed the peptidyl transferase center (PTC), which catalyzes the formation of peptide bonds, thereby polymerizing the amino acids delivered by tRNAs into a polypeptide chain. The nascent polypeptides leave the ribosome through a tunnel in the LSU and interact with protein factors that function in enzymatic processing, targeting, and the membrane insertion of nascent chains at the exit of the ribosomal tunnel. The sequence is that of Large ribosomal subunit protein eL22 from Candida albicans (strain SC5314 / ATCC MYA-2876) (Yeast).